Reading from the N-terminus, the 464-residue chain is Protein FAM90A3 (464 aa).

3 disordered regions span residues 1–42, 70–389, and 411–437; these read MMAR…DPRL, PATL…HDGA, and APSF…SEAP. Composition is skewed to basic and acidic residues over residues 74–89 and 97–114; these read GKKE…KPRV and NKDK…DPQR. A compositionally biased stretch (low complexity) spans 180-197; that stretch reads LASLSPLRKASLSSSSSL.

It belongs to the FAM90 family.

In Homo sapiens (Human), this protein is Protein FAM90A3.